The sequence spans 289 residues: Elongation factor Ts (289 aa).

The involved in Mg(2+) ion dislocation from EF-Tu stretch occupies residues 82–85 (TDFV).

Belongs to the EF-Ts family.

Its subcellular location is the cytoplasm. Functionally, associates with the EF-Tu.GDP complex and induces the exchange of GDP to GTP. It remains bound to the aminoacyl-tRNA.EF-Tu.GTP complex up to the GTP hydrolysis stage on the ribosome. In Marinobacter nauticus (strain ATCC 700491 / DSM 11845 / VT8) (Marinobacter aquaeolei), this protein is Elongation factor Ts.